Reading from the N-terminus, the 244-residue chain is 14-3-3 protein beta/alpha-A (244 aa).

M1 bears the N-acetylmethionine mark.

It belongs to the 14-3-3 family. As to quaternary structure, homodimer, and heterodimer with other family members.

The protein localises to the cytoplasm. Its function is as follows. Adapter protein implicated in the regulation of a large spectrum of both general and specialized signaling pathways. Binds to a large number of partners, usually by recognition of a phosphoserine or phosphothreonine motif. Binding generally results in the modulation of the activity of the binding partner. This Xenopus laevis (African clawed frog) protein is 14-3-3 protein beta/alpha-A (ywhab-a).